We begin with the raw amino-acid sequence, 35 residues long: Photosystem II reaction center protein M (35 aa).

The chain crosses the membrane as a helical span at residues Ile-5–Leu-25.

This sequence belongs to the PsbM family. PSII is composed of 1 copy each of membrane proteins PsbA, PsbB, PsbC, PsbD, PsbE, PsbF, PsbH, PsbI, PsbJ, PsbK, PsbL, PsbM, PsbT, PsbX, PsbY, PsbZ, Psb30/Ycf12, at least 3 peripheral proteins of the oxygen-evolving complex and a large number of cofactors. It forms dimeric complexes.

Its subcellular location is the plastid. It localises to the chloroplast thylakoid membrane. In terms of biological role, one of the components of the core complex of photosystem II (PSII). PSII is a light-driven water:plastoquinone oxidoreductase that uses light energy to abstract electrons from H(2)O, generating O(2) and a proton gradient subsequently used for ATP formation. It consists of a core antenna complex that captures photons, and an electron transfer chain that converts photonic excitation into a charge separation. This subunit is found at the monomer-monomer interface. The protein is Photosystem II reaction center protein M of Staurastrum punctulatum (Green alga).